The sequence spans 471 residues: Phosphoglycerate kinase (471 aa).

Substrate contacts are provided by residues 24 to 26 (DFN), R41, 64 to 67 (HLSR), R127, and R169. ATP contacts are provided by residues K220, G307, E338, and 368–371 (GGDS). The disordered stretch occupies residues 417–471 (KVEAVKEKTTTTTESASKEKSSTAKTASKPATSKTTAAKKPAEKKPAAKKPAAKK). Residues 439–455 (TAKTASKPATSKTTAAK) are compositionally biased toward low complexity.

It belongs to the phosphoglycerate kinase family. Monomer.

The protein localises to the cytoplasm. It carries out the reaction (2R)-3-phosphoglycerate + ATP = (2R)-3-phospho-glyceroyl phosphate + ADP. Its pathway is carbohydrate degradation; glycolysis; pyruvate from D-glyceraldehyde 3-phosphate: step 2/5. The sequence is that of Phosphoglycerate kinase from Malacoplasma penetrans (strain HF-2) (Mycoplasma penetrans).